The following is a 206-amino-acid chain: Probable metallo-hydrolase MJ0888 (206 aa).

Residues His55, His57, Asp59, His60, His130, Asp147, and His190 each contribute to the Zn(2+) site.

This sequence belongs to the metallo-beta-lactamase superfamily. The cofactor is Zn(2+).

The chain is Probable metallo-hydrolase MJ0888 from Methanocaldococcus jannaschii (strain ATCC 43067 / DSM 2661 / JAL-1 / JCM 10045 / NBRC 100440) (Methanococcus jannaschii).